Reading from the N-terminus, the 179-residue chain is Large ribosomal subunit protein uL5 (179 aa).

This sequence belongs to the universal ribosomal protein uL5 family. In terms of assembly, part of the 50S ribosomal subunit; part of the 5S rRNA/L5/L18/L25 subcomplex. Contacts the 5S rRNA and the P site tRNA. Forms a bridge to the 30S subunit in the 70S ribosome.

Functionally, this is one of the proteins that bind and probably mediate the attachment of the 5S RNA into the large ribosomal subunit, where it forms part of the central protuberance. In the 70S ribosome it contacts protein S13 of the 30S subunit (bridge B1b), connecting the 2 subunits; this bridge is implicated in subunit movement. Contacts the P site tRNA; the 5S rRNA and some of its associated proteins might help stabilize positioning of ribosome-bound tRNAs. This Erwinia tasmaniensis (strain DSM 17950 / CFBP 7177 / CIP 109463 / NCPPB 4357 / Et1/99) protein is Large ribosomal subunit protein uL5.